The sequence spans 305 residues: MSTIDKEAVKLYLMQLQDQICQRLEQEDGKATFIEDAWYREPGDRLGGGGRTRVMRDGNVFEQGGVNFSHVQGNAMPASATAHRPELAGRRFEAMGVSLVMHPHNPYVPTSHANVRFFIAEKEGEAPIWWFGGGFDLTPFYPFEEDCQFWHNTAKEVCAPFGADVYAQHKAWCDDYFYLPHRGETRGIGGLFFDDLNQWEFDKCFDYIKAVGEGYCDAYLPIVERRKVTEYGEREREFQLYRRGRYVEFNLVYDRGTLFGLQSGGRTESILMSMPPLARWEYSYEPQADSPEASLYQHYLKPREW.

Serine 98 contributes to the substrate binding site. A divalent metal cation is bound by residues histidine 102 and histidine 112. Histidine 112 serves as the catalytic Proton donor. Position 114–116 (114–116 (NVR)) interacts with substrate. A divalent metal cation-binding residues include histidine 151 and histidine 181. The interval 246–281 (YVEFNLVYDRGTLFGLQSGGRTESILMSMPPLARWE) is important for dimerization. 264 to 266 (GGR) is a substrate binding site.

The protein belongs to the aerobic coproporphyrinogen-III oxidase family. In terms of assembly, homodimer. The cofactor is a divalent metal cation.

It localises to the cytoplasm. The enzyme catalyses coproporphyrinogen III + O2 + 2 H(+) = protoporphyrinogen IX + 2 CO2 + 2 H2O. It participates in porphyrin-containing compound metabolism; protoporphyrin-IX biosynthesis; protoporphyrinogen-IX from coproporphyrinogen-III (O2 route): step 1/1. Its function is as follows. Involved in the heme biosynthesis. Catalyzes the aerobic oxidative decarboxylation of propionate groups of rings A and B of coproporphyrinogen-III to yield the vinyl groups in protoporphyrinogen-IX. This Vibrio vulnificus (strain CMCP6) protein is Oxygen-dependent coproporphyrinogen-III oxidase.